The sequence spans 179 residues: Inosine/xanthosine triphosphatase (179 aa).

Glu71 is a binding site for Mg(2+). Residue 71-72 participates in substrate binding; sequence EA.

Belongs to the YjjX NTPase family. In terms of assembly, homodimer. It depends on Mg(2+) as a cofactor. The cofactor is Mn(2+).

The catalysed reaction is XTP + H2O = XDP + phosphate + H(+). It carries out the reaction ITP + H2O = IDP + phosphate + H(+). Its function is as follows. Phosphatase that hydrolyzes non-canonical purine nucleotides such as XTP and ITP to their respective diphosphate derivatives. Probably excludes non-canonical purines from DNA/RNA precursor pool, thus preventing their incorporation into DNA/RNA and avoiding chromosomal lesions. The protein is Inosine/xanthosine triphosphatase of Shewanella sp. (strain ANA-3).